Reading from the N-terminus, the 28-residue chain is uncharacterized protein (28 aa).

Residues 5-27 form a helical membrane-spanning segment; sequence SAFHACNIIFLPLVKCASATIML.

It localises to the membrane. This is an uncharacterized protein from Saccharomyces cerevisiae (strain ATCC 204508 / S288c) (Baker's yeast).